Here is a 1182-residue protein sequence, read N- to C-terminus: Tyrosine-protein kinase ABL2 (1182 aa).

A disordered region spans residues 1–42 (MGQQVGRVGEAPGLQQPQPRGIRGSSAARPSGRRRDPAGRTA). Residue glycine 2 is the site of N-myristoyl glycine attachment. The interval 2–106 (GQQVGRVGEA…SKENLLGATE (105 aa)) is CAP. Residues 20–30 (RGIRGSSAARP) are compositionally biased toward low complexity. Serine 97 carries the post-translational modification Phosphoserine. The SH3 domain occupies 107 to 167 (SDPNLFVALY…PSNYITPVNS (61 aa)). Tyrosine 116, tyrosine 161, tyrosine 174, tyrosine 185, tyrosine 218, and tyrosine 231 each carry phosphotyrosine. One can recognise an SH2 domain in the interval 173–263 (WYHGPVSRSA…GLVTTLHYPA (91 aa)). At tyrosine 261 the chain carries Phosphotyrosine; by ABL1 and autocatalysis. The residue at position 272 (tyrosine 272) is a Phosphotyrosine; by autocatalysis. Phosphoserine is present on serine 275. Positions 288–539 (ITMKHKLGGG…PSFAETHQAF (252 aa)) constitute a Protein kinase domain. Residue 294-302 (LGGGQYGEV) coordinates ATP. Tyrosine 299 and tyrosine 303 each carry phosphotyrosine. ATP is bound by residues lysine 317 and 362–368 (EYMPYGN). Aspartate 409 (proton acceptor) is an active-site residue. The short motif at 427-451 (DFGLSRLMTGDTYTAHAGAKFPIKW) is the Kinase activation loop element. Tyrosine 439 is subject to Phosphotyrosine; by autocatalysis and SRC-type Tyr-kinases. Position 459 is a phosphotyrosine (tyrosine 459). Residue tyrosine 568 is modified to Phosphotyrosine; by autocatalysis. Residues serine 606, serine 621, serine 632, serine 634, and serine 656 each carry the phosphoserine modification. 2 disordered regions span residues 612–642 (IRST…DAKE) and 655–674 (SSFM…SSFR). The Nuclear localization signal signature appears at 659–661 (KKR). A phosphoserine mark is found at serine 670, serine 671, and serine 672. Tyrosine 684 bears the Phosphotyrosine; by autocatalysis mark. The interval 695–930 (SLQNADGFSV…AVLPTTHNHK (236 aa)) is F-actin-binding. At tyrosine 719 the chain carries Phosphotyrosine. The tract at residues 765–796 (LRAGKPTASDDTSKPFPRSNSTSSMSSGLPEQ) is disordered. Lysine 778 carries the post-translational modification N6-acetyllysine. Over residues 782 to 793 (RSNSTSSMSSGL) the composition is skewed to polar residues. Residue serine 785 is modified to Phosphoserine. Threonine 802 bears the Phosphothreonine mark. The span at 809 to 825 (RSKLQLERTVSTSSQPE) shows a compositional bias: polar residues. Residues 809–858 (RSKLQLERTVSTSSQPEENVDRANDMLPKKSEEGAAPARERPKAKLLPRG) are disordered. Phosphoserine is present on residues serine 819 and serine 822. Over residues 827 to 851 (NVDRANDMLPKKSEEGAAPARERPK) the composition is skewed to basic and acidic residues. Phosphoserine occurs at positions 915 and 936. The interval 964–1059 (HQVTSSGDKD…TSSISPAKMA (96 aa)) is disordered. Positions 1020-1182 (EGGKKAAPGP…VQEISDVVQR (163 aa)) are F-actin-binding.

The protein belongs to the protein kinase superfamily. Tyr protein kinase family. ABL subfamily. Interacts with PSMA7. Interacts with CTTN. Found in a complex with ABL1, ABL2, CRK and UNC119; leading to the inhibition of CRK phosphorylation by ABL kinases. It depends on Mg(2+) as a cofactor. Mn(2+) serves as cofactor. In terms of processing, phosphorylated at Tyr-261 by ABL1 in response to oxidative stress. Phosphorylated by PDGFRB. Post-translationally, polyubiquitinated. Polyubiquitination of ABL2 leads to degradation. In terms of tissue distribution, most abundant in adult mouse brain, especially in synapse-rich regions.

It localises to the cytoplasm. The protein localises to the cytoskeleton. The enzyme catalyses L-tyrosyl-[protein] + ATP = O-phospho-L-tyrosyl-[protein] + ADP + H(+). Stabilized in the inactive form by an association between the SH3 domain and the SH2-TK linker region, interactions of the N-terminal cap, and contributions from an N-terminal myristoyl group and phospholipids. Activated by autophosphorylation as well as by SRC-family kinase-mediated phosphorylation. Activated by RIN1 binding to the SH2 and SH3 domains. Inhibited by imatinib mesylate (Gleevec). Phosphatidylinositol 4,5-bisphosphate (PIP2), a highly abundant phosphoinositide known to regulate cytoskeletal and membrane proteins, inhibits the tyrosine kinase activity. Non-receptor tyrosine-protein kinase that plays an ABL1-overlapping role in key processes linked to cell growth and survival such as cytoskeleton remodeling in response to extracellular stimuli, cell motility and adhesion, receptor endocytosis, autophagy, DNA damage response and apoptosis. Coordinates actin remodeling through tyrosine phosphorylation of proteins controlling cytoskeleton dynamics like MYH10 (involved in movement); CTTN (involved in signaling); or TUBA1 and TUBB (microtubule subunits). Binds directly F-actin and regulates actin cytoskeletal structure through its F-actin-bundling activity. Involved in the regulation of cell adhesion and motility through phosphorylation of key regulators of these processes such as CRK, CRKL or DOK1. Required for adhesion-dependent phosphorylation of ARHGAP35 which promotes its association with RASA1, resulting in recruitment of ARHGAP35 to the cell periphery where it inhibits RHO. Phosphorylates multiple receptor tyrosine kinases like PDGFRB and other substrates which are involved in endocytosis regulation such as RIN1. In brain, may regulate neurotransmission by phosphorylating proteins at the synapse. Finally, functions as its own regulator through autocatalytic activity as well as through phosphorylation of its inhibitor, ABI1. Positively regulates chemokine-mediated T-cell migration, polarization, and homing to lymph nodes and immune-challenged tissues, potentially via activation of NEDD9/HEF1 and RAP1. This chain is Tyrosine-protein kinase ABL2, found in Mus musculus (Mouse).